A 593-amino-acid polypeptide reads, in one-letter code: Mitochondrial sodium/calcium exchanger protein (593 aa).

A signal peptide spans 1 to 20 (MGPLWALRVAGALSVAGVLA). At 21 to 93 (GHDGSQRAGQ…GAFCTFPSSL (73 aa)) the chain is on the extracellular side. An N-linked (GlcNAc...) asparagine glycan is attached at asparagine 58. Residues 94–114 (LPLSVSLYALWLLYLFVILGV) form a helical membrane-spanning segment. The Cytoplasmic portion of the chain corresponds to 115–135 (TAEKFFCPNLSAISTNLKLSH). A helical membrane pass occupies residues 136 to 158 (NGLGVVGHSLTPALHGVTFLAFG). Residues 159–178 (NGAPDIFSAVVAFSDPRTAG) lie on the Extracellular side of the membrane. Residues 179–199 (LAVGAIFGAGIFVTTVVAGGI) form a helical membrane-spanning segment. The Cytoplasmic segment spans residues 200–215 (ALVKPFAAASRPFLRD). The helical transmembrane segment at 216–236 (VIFYMVAVFLTFLVLYFGYIT) threads the bilayer. Over 237–239 (LGE) the chain is Extracellular. Residues 240–260 (ALGYLGLYVFYVFTVVLCTWI) form a helical membrane-spanning segment. Topologically, residues 261–334 (HRWQRGDGPP…KWRRKPWYWR (74 aa)) are cytoplasmic. Over residues 268–277 (GPPPPGPWEP) the composition is skewed to pro residues. A disordered region spans residues 268–291 (GPPPPGPWEPAIPTDAEEQESSGT). Residues 335–355 (LFKVLKVPVELVLLLTVPVVD) traverse the membrane as a helical segment. Topologically, residues 356–369 (PDKDDLNWKRPLNC) are extracellular. Residues 370–390 (LHIVTGPLLCIFTLKSGAYGL) form a helical membrane-spanning segment. Residues 391-395 (YQIQG) are Cytoplasmic-facing. The helical transmembrane segment at 396–416 (VFPVWALVALAGSVLAIIVFV) threads the bilayer. Topologically, residues 417 to 428 (TTHNEEPPKYHC) are extracellular. A helical membrane pass occupies residues 429–449 (VFAFLGFLSSAMWINAAATEL). Residues 450–454 (VNILR) are Cytoplasmic-facing. Residues 455-475 (TLGIIFELSNTVLGLTLLAWG) traverse the membrane as a helical segment. The Extracellular portion of the chain corresponds to 476 to 496 (NSIGDTFSDLTMARQGYPRMA). The chain crosses the membrane as a helical span at residues 497-517 (FSACFGGIIFNILVGVGLGCL). Residues 518–533 (LQMTNSQMVVKLEPDS) lie on the Cytoplasmic side of the membrane. The helical transmembrane segment at 534–554 (LLVWILAGALGLSLVFSFVAV) threads the bilayer. The Extracellular segment spans residues 555-564 (PAQCFQLGKA). Residues 565–585 (YGTCLILYYLVFLCVALLTEF) traverse the membrane as a helical segment. The Cytoplasmic segment spans residues 586 to 593 (RVIHLAAT).

This sequence belongs to the Ca(2+):cation antiporter (CaCA) (TC 2.A.19) family. SLC24A subfamily.

Its subcellular location is the mitochondrion inner membrane. The catalysed reaction is Ca(2+)(in) + 3 Na(+)(out) = Ca(2+)(out) + 3 Na(+)(in). Functionally, mitochondrial sodium/calcium antiporter that mediates sodium-dependent calcium efflux from mitochondrion, by mediating the exchange of 3 sodium ions per 1 calcium ion. Plays a central role in mitochondrial calcium homeostasis by mediating mitochondrial calcium extrusion: calcium efflux is essential for mitochondrial function and cell survival, notably in cardiomyocytes. Involved in B-lymphocyte chemotaxis. The protein is Mitochondrial sodium/calcium exchanger protein of Gallus gallus (Chicken).